Reading from the N-terminus, the 163-residue chain is Nucleotide-binding protein YajQ (163 aa).

The protein belongs to the YajQ family.

Its function is as follows. Nucleotide-binding protein. The polypeptide is Nucleotide-binding protein YajQ (Escherichia coli O127:H6 (strain E2348/69 / EPEC)).